Reading from the N-terminus, the 82-residue chain is Small ribosomal subunit protein eS21z (82 aa).

M1 is modified (N-acetylmethionine).

Belongs to the eukaryotic ribosomal protein eS21 family.

The sequence is that of Small ribosomal subunit protein eS21z (RPS21B) from Arabidopsis thaliana (Mouse-ear cress).